A 140-amino-acid chain; its full sequence is Envelope protein A28 homolog (140 aa).

The helical; Signal-anchor for type II membrane protein transmembrane segment at 1–21 (MNPVTVFFVVVVTVAVCMILF) threads the bilayer. Topologically, residues 22-140 (QVYSIYLNYD…RECTFLKSAL (119 aa)) are virion surface.

This sequence belongs to the poxviridae A28 protein family. Post-translationally, contains two intramolecular disulfide bonds. They are created by the viral disulfide bond formation pathway, a poxvirus-specific pathway that operates on the cytoplasmic side of the MV membranes.

It is found in the virion membrane. In terms of biological role, envelope protein required for virus entry into host cell and for cell-cell fusion (syncytium formation). The sequence is that of Envelope protein A28 homolog from Myxoma virus (strain Lausanne) (MYXV).